The sequence spans 524 residues: Excitatory amino acid transporter 3 (524 aa).

Topologically, residues 1–18 are cytoplasmic; the sequence is MGKPARKGCEWKRFLKNN. A helical transmembrane segment spans residues 19–38; it reads WVLLSTVAAVVLGITTGVLV. Topologically, residues 39 to 61 are extracellular; it reads REHSNLSTLEKFYFAFPGEILMR. Asn43 carries an N-linked (GlcNAc...) asparagine glycan. Residues 62-82 traverse the membrane as a helical segment; sequence MLKLIILPLIISSMITGVAAL. The Cytoplasmic portion of the chain corresponds to 83–93; sequence DSNVSGKIGLR. A helical transmembrane segment spans residues 94–114; sequence AVVYYFCTTLIAVILGIVLVV. Residues Tyr98, Thr101, and Thr102 each coordinate Na(+). At 115-205 the chain is on the extracellular side; that stretch reads SIKPGVTQKV…KTKEYKIVGM (91 aa). Asn178 and Asn195 each carry an N-linked (GlcNAc...) asparagine glycan. A helical transmembrane segment spans residues 206-229; it reads YSDGINVLGLIVFCLVFGLVIGKM. Topologically, residues 230 to 238 are cytoplasmic; that stretch reads GEKGQILVD. Residues 239-266 form a helical membrane-spanning segment; the sequence is FFNALSDATMKIVQIIMCYMPLGILFLI. At 267 to 286 the chain is on the extracellular side; sequence AGKIIEVEDWEIFRKLGLYM. Residues 287–308 form a helical membrane-spanning segment; the sequence is ATVLTGLAIHSIVILPLIYFIV. The Cytoplasmic segment spans residues 309–313; the sequence is VRKNP. Positions 314–344 form an intramembrane region, discontinuously helical; the sequence is FRFAMGMAQALLTALMISSSSATLPVTFRCA. L-aspartate contacts are provided by Ser331 and Ser333. The Cytoplasmic segment spans residues 345–353; sequence EENNQVDKR. A helical membrane pass occupies residues 354-380; sequence ITRFVLPVGATINMDGTALYEAVAAVF. Na(+)-binding residues include Gly362, Thr364, Asn366, and Asp368. Residue Thr370 coordinates L-aspartate. Residues 381 to 393 lie on the Extracellular side of the membrane; it reads IAQLNDLDLGIGQ. The segment at residues 394–427 is an intramembrane region (discontinuously helical); that stretch reads IITISITATSASIGAAGVPQAGLVTMVIVLSAVG. Ser405, Ile406, and Ala408 together coordinate Na(+). An L-aspartate-binding site is contributed by Val411. The Extracellular segment spans residues 428-440; sequence LPAEDVTLIIAVD. Residues 441–462 form a helical membrane-spanning segment; the sequence is WLLDRFRTMVNVLGDAFGTGIV. Residues Arg447, Thr448, and Asn451 each coordinate L-aspartate. 2 residues coordinate Na(+): Asn451 and Asp455. Topologically, residues 463–524 are cytoplasmic; sequence EKLSKKELEQ…TISFTQTSQF (62 aa). Phosphoserine occurs at positions 517 and 522.

This sequence belongs to the dicarboxylate/amino acid:cation symporter (DAACS) (TC 2.A.23) family. SLC1A1 subfamily. As to quaternary structure, homotrimer. Interacts with ARL6IP5. Interacts with RTN2 (via N-terminus); the interaction promotes cell surface expression of SLC1A1. Interacts with SORCS2; this interaction is important for normal expression at the cell membrane. In terms of processing, glycosylated. Expressed in all tissues tested including liver, muscle, testis, ovary, retinoblastoma cell line, neurons and brain (in which there was dense expression in substantia nigra, red nucleus, hippocampus and in cerebral cortical layers).

The protein resides in the cell membrane. The protein localises to the apical cell membrane. It localises to the synapse. Its subcellular location is the synaptosome. It is found in the early endosome membrane. The protein resides in the late endosome membrane. The protein localises to the recycling endosome membrane. The catalysed reaction is K(+)(in) + L-glutamate(out) + 3 Na(+)(out) + H(+)(out) = K(+)(out) + L-glutamate(in) + 3 Na(+)(in) + H(+)(in). It carries out the reaction K(+)(in) + L-aspartate(out) + 3 Na(+)(out) + H(+)(out) = K(+)(out) + L-aspartate(in) + 3 Na(+)(in) + H(+)(in). The enzyme catalyses D-aspartate(out) + K(+)(in) + 3 Na(+)(out) + H(+)(out) = D-aspartate(in) + K(+)(out) + 3 Na(+)(in) + H(+)(in). It catalyses the reaction K(+)(in) + L-cysteine(out) + 3 Na(+)(out) + H(+)(out) = K(+)(out) + L-cysteine(in) + 3 Na(+)(in) + H(+)(in). Functionally, sodium-dependent, high-affinity amino acid transporter that mediates the uptake of L-glutamate and also L-aspartate and D-aspartate. Can also transport L-cysteine. Functions as a symporter that transports one amino acid molecule together with two or three Na(+) ions and one proton, in parallel with the counter-transport of one K(+) ion. Mediates Cl(-) flux that is not coupled to amino acid transport; this avoids the accumulation of negative charges due to aspartate and Na(+) symport. Plays an important role in L-glutamate and L-aspartate reabsorption in renal tubuli. Plays a redundant role in the rapid removal of released glutamate from the synaptic cleft, which is essential for terminating the postsynaptic action of glutamate. Contributes to glutathione biosynthesis and protection against oxidative stress via its role in L-glutamate and L-cysteine transport. Negatively regulated by ARL6IP5. The protein is Excitatory amino acid transporter 3 of Homo sapiens (Human).